We begin with the raw amino-acid sequence, 661 residues long: uncharacterized protein (661 aa).

Residues 25–52 (LLPSEPPVGDMNNEDSDTNTSITQSPTN) form a disordered region. Residues 42-52 (TNTSITQSPTN) are compositionally biased toward polar residues. The SANT domain maps to 246 to 297 (SMPDIWNEEQHSIFVQQFILHGKKFGKIAEAVPGKNSKECVLHYYLTKRTTD). 4 disordered regions span residues 306–329 (TKTK…KSKG), 478–499 (YYEP…TRKE), 548–570 (PMKM…TFQL), and 604–633 (RIDE…PNSQ). The span at 308–328 (TKGRRRKKLLPSQRGGKKKSK) shows a compositional bias: basic residues. Residues 478 to 487 (YYEPKLEQHS) are compositionally biased toward basic and acidic residues. The segment covering 604-617 (RIDELSVEDQEHTT) has biased composition (basic and acidic residues).

It is found in the nucleus. This is an uncharacterized protein from Schizosaccharomyces pombe (strain 972 / ATCC 24843) (Fission yeast).